We begin with the raw amino-acid sequence, 229 residues long: Large ribosomal subunit protein uL1 (229 aa).

In terms of assembly, part of the 50S ribosomal subunit.

Binds directly to 23S rRNA. The L1 stalk is quite mobile in the ribosome, and is involved in E site tRNA release. In terms of biological role, protein L1 is also a translational repressor protein, it controls the translation of the L11 operon by binding to its mRNA. The sequence is that of Large ribosomal subunit protein uL1 from Rhodopseudomonas palustris (strain ATCC BAA-98 / CGA009).